The sequence spans 262 residues: Sulfur carrier protein FdhD (262 aa).

Cys-105 acts as the Cysteine persulfide intermediate in catalysis. Phe-246 to Arg-251 is a binding site for Mo-bis(molybdopterin guanine dinucleotide).

Belongs to the FdhD family.

The protein resides in the cytoplasm. Required for formate dehydrogenase (FDH) activity. Acts as a sulfur carrier protein that transfers sulfur from IscS to the molybdenum cofactor prior to its insertion into FDH. In Picrophilus torridus (strain ATCC 700027 / DSM 9790 / JCM 10055 / NBRC 100828 / KAW 2/3), this protein is Sulfur carrier protein FdhD.